A 256-amino-acid chain; its full sequence is MIQSITSQGLVLYNRNFREDDKLVKIFTEQVGKRMFFVKHAGQSKLAPVIQPLVLARFLLRINDDGLSYIEDYHEVMTFPKINSDLFVMAYATYVAALADASLQDNQQDAPLFAFLQKTLELMEAGLDYQVLTNIFEIQILTRFGISLNFNECVFCHRVGQAFDFSFKYGACLCPEHYHEDKRRCHLNPNIPYLLNQFQAIDFETLETISLKPGIKQELRQFMDQLYEEYVGIHLKSKKFIDSLADWGQLLKEEKK.

This sequence belongs to the RecO family.

Its function is as follows. Involved in DNA repair and RecF pathway recombination. In Streptococcus pneumoniae (strain Hungary19A-6), this protein is DNA repair protein RecO.